The chain runs to 249 residues: Glycoprotein 2a (249 aa).

The N-terminal stretch at 1–35 (MQWGHCGVKSASCSWTPSLSSLLVWLILPFSLPYC) is a signal peptide. At 36–207 (LGSPSQDGYW…LTDFRQWLIS (172 aa)) the chain is on the virion surface side. Asparagine 173 and asparagine 179 each carry an N-linked (GlcNAc...) asparagine; by host glycan. Residues 208–228 (VHASIFSSVASSVTLFIVLWL) form a helical membrane-spanning segment. Over 229-249 (RIPALRYVFGFHWPTATHHSS) the chain is Intravirion.

Heterotrimer of GP2a, GP3, and GP4. The GP2a-GP3-GP4 complex associates with the E protein. Interacts with host CD163; this interaction plays a role in virus entry into host cell.

It is found in the virion membrane. It localises to the host endoplasmic reticulum membrane. The protein resides in the host Golgi apparatus membrane. The protein localises to the secreted. Functionally, minor envelope protein. Along with GP4, serves as the viral attachment protein responsible for mediating interactions with CD163 thereby playing a role in virus entry into susceptible host cells. This Porcine reproductive and respiratory syndrome virus (strain Lelystad) (PRRSV) protein is Glycoprotein 2a (GP2a).